The sequence spans 301 residues: MSRNIRTFRDIGNNDDGGPDSDDSGADAAERGAPQEFYAGSGQAVQGPRGAAARGPDSEAHIRRILQAAEVVQPEGGEAPRGRPSGRETISLTLHLWSDGLSIEDGPLMSRQDPRTIEFLESVGKGEIPPSLVQQYPGKEIDFKVNRHHEEYVAPKMKPFGGSGVRLGNVVPTVLGQSSSSATTAGTSSATTDHNPDHTAENEAKQLEDAKKELSTNMNEPTTNIQIRLPNNQRLVGIFNHSHTLEAVRTFICTARPDMIYAPFQMMAAYPPKPFEDESQTLKDANVLNSVVAVKILPTTN.

Residues 1–61 (MSRNIRTFRD…AARGPDSEAH (61 aa)) are disordered. The SEP domain occupies 89-153 (TISLTLHLWS…KVNRHHEEYV (65 aa)). A disordered region spans residues 176 to 200 (GQSSSSATTAGTSSATTDHNPDHTA). Over residues 178-192 (SSSSATTAGTSSATT) the composition is skewed to low complexity. A UBX domain is found at 218-295 (MNEPTTNIQI…NVLNSVVAVK (78 aa)).

Belongs to the NSFL1C family. As to quaternary structure, interacts with cdc-48.1 (via N-terminus) and cdc-48.2 (via N-terminus). Interacts with kinase air-1. In terms of tissue distribution, expressed in the germline (at protein level). Expressed in spermatocytes but not in mature sperm (at protein level). Ubiquitously expressed. Predominantly expressed in the spermatheca.

The protein resides in the cytoplasm. Its subcellular location is the perinuclear region. The protein localises to the nucleus. It is found in the cytoskeleton. It localises to the microtubule organizing center. The protein resides in the centrosome. Its function is as follows. Ubiquitin-binding protein which acts as an adapter for ATPase cdc-48.1 and/or cdc-48.2, conferring substrate specificity. Together with ubxn-2 and ubxn-3, plays a role in hermaphrodite spermatogenesis probably by promoting the degradation of sex determination terminal factor tra-1. Probably in association with ATPase cdc-48.1 or/and cdc-48.2, regulates the centrosomal levels of kinase air-1 levels during mitotic progression by promoting air-1 removal from centrosomes in prophase. Also, regulates spindle orientation in the one-cell embryo by controlling centration and rotation of the pronuclei-centrosome complex in prophase. The polypeptide is UBX domain-containing protein 2 (Caenorhabditis elegans).